We begin with the raw amino-acid sequence, 62 residues long: Large ribosomal subunit protein bL33 (62 aa).

It belongs to the bacterial ribosomal protein bL33 family.

The polypeptide is Large ribosomal subunit protein bL33 (Acaryochloris marina (strain MBIC 11017)).